Here is a 398-residue protein sequence, read N- to C-terminus: Acetate kinase (398 aa).

Asparagine 7 lines the Mg(2+) pocket. Lysine 14 provides a ligand contact to ATP. A substrate-binding site is contributed by arginine 91. Aspartate 148 (proton donor/acceptor) is an active-site residue. Residues 208 to 212, 282 to 284, and 330 to 334 each bind ATP; these read HLGNG, DFR, and GVGEN. Glutamate 383 lines the Mg(2+) pocket.

It belongs to the acetokinase family. In terms of assembly, homodimer. It depends on Mg(2+) as a cofactor. The cofactor is Mn(2+).

It is found in the cytoplasm. It catalyses the reaction acetate + ATP = acetyl phosphate + ADP. It functions in the pathway metabolic intermediate biosynthesis; acetyl-CoA biosynthesis; acetyl-CoA from acetate: step 1/2. Functionally, catalyzes the formation of acetyl phosphate from acetate and ATP. Can also catalyze the reverse reaction. The chain is Acetate kinase from Carboxydothermus hydrogenoformans (strain ATCC BAA-161 / DSM 6008 / Z-2901).